Consider the following 84-residue polypeptide: Cytochrome b559 subunit alpha (84 aa).

The chain crosses the membrane as a helical span at residues 22-36 (IIHSITIPSLFVSGW). Residue His-24 coordinates heme.

It belongs to the PsbE/PsbF family. In terms of assembly, heterodimer of an alpha subunit and a beta subunit. PSII is composed of 1 copy each of membrane proteins PsbA, PsbB, PsbC, PsbD, PsbE, PsbF, PsbH, PsbI, PsbJ, PsbK, PsbL, PsbM, PsbT, PsbX, PsbY, PsbZ, Psb30/Ycf12, at least 3 peripheral proteins of the oxygen-evolving complex and a large number of cofactors. It forms dimeric complexes. The cofactor is heme b.

Its subcellular location is the plastid. It is found in the chloroplast thylakoid membrane. Functionally, this b-type cytochrome is tightly associated with the reaction center of photosystem II (PSII). PSII is a light-driven water:plastoquinone oxidoreductase that uses light energy to abstract electrons from H(2)O, generating O(2) and a proton gradient subsequently used for ATP formation. It consists of a core antenna complex that captures photons, and an electron transfer chain that converts photonic excitation into a charge separation. This is Cytochrome b559 subunit alpha from Phaeodactylum tricornutum (strain CCAP 1055/1).